The sequence spans 330 residues: Beta-ketoacyl-[acyl-carrier-protein] synthase III (330 aa).

Residues Cys116 and His257 contribute to the active site. The segment at 258-262 is ACP-binding; sequence QANQR. The active site involves Asn287.

The protein belongs to the thiolase-like superfamily. FabH family. As to quaternary structure, homodimer.

The protein localises to the cytoplasm. It catalyses the reaction malonyl-[ACP] + acetyl-CoA + H(+) = 3-oxobutanoyl-[ACP] + CO2 + CoA. Its pathway is lipid metabolism; fatty acid biosynthesis. In terms of biological role, catalyzes the condensation reaction of fatty acid synthesis by the addition to an acyl acceptor of two carbons from malonyl-ACP. Catalyzes the first condensation reaction which initiates fatty acid synthesis and may therefore play a role in governing the total rate of fatty acid production. Possesses both acetoacetyl-ACP synthase and acetyl transacylase activities. Its substrate specificity determines the biosynthesis of branched-chain and/or straight-chain of fatty acids. This is Beta-ketoacyl-[acyl-carrier-protein] synthase III from Synechocystis sp. (strain ATCC 27184 / PCC 6803 / Kazusa).